A 619-amino-acid chain; its full sequence is Dihydroxy-acid dehydratase 1 (619 aa).

Asp81 is a Mg(2+) binding site. Cys122 provides a ligand contact to [2Fe-2S] cluster. Mg(2+) is bound by residues Asp123 and Lys124. Lys124 is subject to N6-carboxylysine. Cys198 is a [2Fe-2S] cluster binding site. Mg(2+) is bound at residue Glu494. The active-site Proton acceptor is Ser520.

It belongs to the IlvD/Edd family. Homodimer. [2Fe-2S] cluster serves as cofactor. Requires Mg(2+) as cofactor.

The enzyme catalyses (2R)-2,3-dihydroxy-3-methylbutanoate = 3-methyl-2-oxobutanoate + H2O. It carries out the reaction (2R,3R)-2,3-dihydroxy-3-methylpentanoate = (S)-3-methyl-2-oxopentanoate + H2O. It functions in the pathway amino-acid biosynthesis; L-isoleucine biosynthesis; L-isoleucine from 2-oxobutanoate: step 3/4. Its pathway is amino-acid biosynthesis; L-valine biosynthesis; L-valine from pyruvate: step 3/4. Its function is as follows. Functions in the biosynthesis of branched-chain amino acids. Catalyzes the dehydration of (2R,3R)-2,3-dihydroxy-3-methylpentanoate (2,3-dihydroxy-3-methylvalerate) into 2-oxo-3-methylpentanoate (2-oxo-3-methylvalerate) and of (2R)-2,3-dihydroxy-3-methylbutanoate (2,3-dihydroxyisovalerate) into 2-oxo-3-methylbutanoate (2-oxoisovalerate), the penultimate precursor to L-isoleucine and L-valine, respectively. This is Dihydroxy-acid dehydratase 1 from Bordetella pertussis (strain Tohama I / ATCC BAA-589 / NCTC 13251).